The primary structure comprises 365 residues: Alternative oxidase 2, mitochondrial (365 aa).

Positions Thr-32–Ala-46 are enriched in low complexity. Residues Thr-32 to His-52 are disordered. Positions 166, 205, and 208 each coordinate Fe cation. The chain crosses the membrane as a helical span at residues Trp-220–Leu-242. 4 residues coordinate Fe cation: Glu-256, Glu-257, Glu-312, and His-315. Positions Gln-345 to Leu-365 are disordered.

This sequence belongs to the alternative oxidase family. Fe cation is required as a cofactor.

The protein localises to the mitochondrion inner membrane. Its function is as follows. Catalyzes cyanide-resistant oxygen consumption. May increase respiration when the cytochrome respiratory pathway is restricted, or in response to low temperatures. The polypeptide is Alternative oxidase 2, mitochondrial (AOX2) (Candida albicans (Yeast)).